The primary structure comprises 223 residues: Endonuclease V (223 aa).

Mg(2+)-binding residues include D44 and D109.

This sequence belongs to the endonuclease V family. The cofactor is Mg(2+).

The protein resides in the cytoplasm. The enzyme catalyses Endonucleolytic cleavage at apurinic or apyrimidinic sites to products with a 5'-phosphate.. DNA repair enzyme involved in the repair of deaminated bases. Selectively cleaves double-stranded DNA at the second phosphodiester bond 3' to a deoxyinosine leaving behind the intact lesion on the nicked DNA. The sequence is that of Endonuclease V from Methanothrix thermoacetophila (strain DSM 6194 / JCM 14653 / NBRC 101360 / PT) (Methanosaeta thermophila).